We begin with the raw amino-acid sequence, 363 residues long: Holliday junction branch migration complex subunit RuvB (363 aa).

Positions 1 to 32 (MSDVERTEFEIPGGIPPRRNGGQGRAADTNVD) are disordered. The segment at 27 to 207 (ADTNVDANLK…FGFTAQMEFY (181 aa)) is large ATPase domain (RuvB-L). ATP is bound by residues leucine 46, arginine 47, glycine 88, lysine 91, threonine 92, threonine 93, 154–156 (EDF), arginine 197, tyrosine 207, and arginine 244. Residue threonine 92 participates in Mg(2+) binding. The interval 208 to 278 (DVPDLTKVVK…AANAALIVFD (71 aa)) is small ATPAse domain (RuvB-S). Residues 281–363 (EVGLDRLDRA…EPPEGTIGDY (83 aa)) form a head domain (RuvB-H) region. DNA is bound by residues arginine 336 and arginine 341.

The protein belongs to the RuvB family. Homohexamer. Forms an RuvA(8)-RuvB(12)-Holliday junction (HJ) complex. HJ DNA is sandwiched between 2 RuvA tetramers; dsDNA enters through RuvA and exits via RuvB. An RuvB hexamer assembles on each DNA strand where it exits the tetramer. Each RuvB hexamer is contacted by two RuvA subunits (via domain III) on 2 adjacent RuvB subunits; this complex drives branch migration. In the full resolvosome a probable DNA-RuvA(4)-RuvB(12)-RuvC(2) complex forms which resolves the HJ.

The protein resides in the cytoplasm. It carries out the reaction ATP + H2O = ADP + phosphate + H(+). Its function is as follows. The RuvA-RuvB-RuvC complex processes Holliday junction (HJ) DNA during genetic recombination and DNA repair, while the RuvA-RuvB complex plays an important role in the rescue of blocked DNA replication forks via replication fork reversal (RFR). RuvA specifically binds to HJ cruciform DNA, conferring on it an open structure. The RuvB hexamer acts as an ATP-dependent pump, pulling dsDNA into and through the RuvAB complex. RuvB forms 2 homohexamers on either side of HJ DNA bound by 1 or 2 RuvA tetramers; 4 subunits per hexamer contact DNA at a time. Coordinated motions by a converter formed by DNA-disengaged RuvB subunits stimulates ATP hydrolysis and nucleotide exchange. Immobilization of the converter enables RuvB to convert the ATP-contained energy into a lever motion, pulling 2 nucleotides of DNA out of the RuvA tetramer per ATP hydrolyzed, thus driving DNA branch migration. The RuvB motors rotate together with the DNA substrate, which together with the progressing nucleotide cycle form the mechanistic basis for DNA recombination by continuous HJ branch migration. Branch migration allows RuvC to scan DNA until it finds its consensus sequence, where it cleaves and resolves cruciform DNA. In Corynebacterium glutamicum (strain R), this protein is Holliday junction branch migration complex subunit RuvB.